Here is a 368-residue protein sequence, read N- to C-terminus: Serine/threonine-protein phosphatase PP2A-like PPG1 (368 aa).

The Mn(2+) site is built by Asp-50, His-52, Asp-78, and Asn-110. His-111 serves as the catalytic Proton donor. 2 residues coordinate Mn(2+): His-161 and His-247.

The protein belongs to the PPP phosphatase family. PP-2A subfamily. Inactivated in a complex with phosphatase methylesterase PPE1 (PP2Ai). Interacts with phosphatase 2A activator RRD1, which can reactivate PP2Ai by dissociating the catalytic subunit from the complex. Interacts with TAP42. It depends on Mn(2+) as a cofactor. Reversibly methyl esterified on Leu-368 by leucine carboxyl methyltransferase 1 (PPM1) and protein phosphatase methylesterase 1 (PPE1). Carboxyl methylation influences the affinity of the catalytic subunit for the different regulatory subunits, thereby modulating the PP2A holoenzyme's substrate specificity, enzyme activity and cellular localization.

The enzyme catalyses O-phospho-L-seryl-[protein] + H2O = L-seryl-[protein] + phosphate. It carries out the reaction O-phospho-L-threonyl-[protein] + H2O = L-threonyl-[protein] + phosphate. Functionally, involved in glycogen accumulation. In Saccharomyces cerevisiae (strain ATCC 204508 / S288c) (Baker's yeast), this protein is Serine/threonine-protein phosphatase PP2A-like PPG1 (PPG1).